The chain runs to 98 residues: Integration host factor subunit beta (98 aa).

The protein belongs to the bacterial histone-like protein family. In terms of assembly, heterodimer of an alpha and a beta chain.

Its function is as follows. This protein is one of the two subunits of integration host factor, a specific DNA-binding protein that functions in genetic recombination as well as in transcriptional and translational control. The sequence is that of Integration host factor subunit beta from Teredinibacter turnerae (strain ATCC 39867 / T7901).